We begin with the raw amino-acid sequence, 176 residues long: Nucleoside triphosphate/diphosphate phosphatase (176 aa).

Residue arginine 23 is the Proton donor of the active site. Positions 87, 103, 105, 107, 120, and 123 each coordinate Mg(2+).

Belongs to the Ntdp family. The cofactor is Mg(2+).

The catalysed reaction is a ribonucleoside 5'-triphosphate + H2O = a ribonucleoside 5'-diphosphate + phosphate + H(+). The enzyme catalyses a ribonucleoside 5'-diphosphate + H2O = a ribonucleoside 5'-phosphate + phosphate + H(+). In terms of biological role, has nucleoside phosphatase activity towards nucleoside triphosphates and nucleoside diphosphates. The chain is Nucleoside triphosphate/diphosphate phosphatase from Bacillus cereus (strain B4264).